The sequence spans 171 residues: Crossover junction endodeoxyribonuclease RuvC (171 aa).

Catalysis depends on residues aspartate 7, glutamate 66, and aspartate 138. Residues aspartate 7, glutamate 66, and aspartate 138 each contribute to the Mg(2+) site.

This sequence belongs to the RuvC family. As to quaternary structure, homodimer which binds Holliday junction (HJ) DNA. The HJ becomes 2-fold symmetrical on binding to RuvC with unstacked arms; it has a different conformation from HJ DNA in complex with RuvA. In the full resolvosome a probable DNA-RuvA(4)-RuvB(12)-RuvC(2) complex forms which resolves the HJ. Mg(2+) serves as cofactor.

The protein localises to the cytoplasm. It catalyses the reaction Endonucleolytic cleavage at a junction such as a reciprocal single-stranded crossover between two homologous DNA duplexes (Holliday junction).. Functionally, the RuvA-RuvB-RuvC complex processes Holliday junction (HJ) DNA during genetic recombination and DNA repair. Endonuclease that resolves HJ intermediates. Cleaves cruciform DNA by making single-stranded nicks across the HJ at symmetrical positions within the homologous arms, yielding a 5'-phosphate and a 3'-hydroxyl group; requires a central core of homology in the junction. The consensus cleavage sequence is 5'-(A/T)TT(C/G)-3'. Cleavage occurs on the 3'-side of the TT dinucleotide at the point of strand exchange. HJ branch migration catalyzed by RuvA-RuvB allows RuvC to scan DNA until it finds its consensus sequence, where it cleaves and resolves the cruciform DNA. The polypeptide is Crossover junction endodeoxyribonuclease RuvC (Francisella tularensis subsp. mediasiatica (strain FSC147)).